The following is a 65-amino-acid chain: Small ribosomal subunit protein bS21 (65 aa).

Positions 46–57 (RLKRSRSKRRAQ) are enriched in basic residues. The tract at residues 46-65 (RLKRSRSKRRAQRANEERNS) is disordered.

The protein belongs to the bacterial ribosomal protein bS21 family.

This is Small ribosomal subunit protein bS21 from Chlorobaculum tepidum (strain ATCC 49652 / DSM 12025 / NBRC 103806 / TLS) (Chlorobium tepidum).